Here is a 100-residue protein sequence, read N- to C-terminus: Large ribosomal subunit protein uL23 (100 aa).

This sequence belongs to the universal ribosomal protein uL23 family. In terms of assembly, part of the 50S ribosomal subunit. Contacts protein L29, and trigger factor when it is bound to the ribosome.

One of the early assembly proteins it binds 23S rRNA. One of the proteins that surrounds the polypeptide exit tunnel on the outside of the ribosome. Forms the main docking site for trigger factor binding to the ribosome. The protein is Large ribosomal subunit protein uL23 of Prochlorococcus marinus (strain MIT 9215).